Consider the following 239-residue polypeptide: RNA chaperone ProQ (239 aa).

The disordered stretch occupies residues Lys-107–Ala-177. Over residues Ala-115 to Thr-137 the composition is skewed to basic and acidic residues.

This sequence belongs to the ProQ family.

The protein resides in the cytoplasm. Its function is as follows. RNA chaperone with significant RNA binding, RNA strand exchange and RNA duplexing activities. May regulate ProP activity through an RNA-based, post-transcriptional mechanism. This is RNA chaperone ProQ from Photorhabdus laumondii subsp. laumondii (strain DSM 15139 / CIP 105565 / TT01) (Photorhabdus luminescens subsp. laumondii).